A 243-amino-acid polypeptide reads, in one-letter code: Terpene cyclase janB (243 aa).

7 helical membrane-spanning segments follow: residues 19–39, 48–68, 77–97, 112–132, 134–154, 172–194, and 205–225; these read LADLFVLGMGLGWVINYVGMV, YGMAIMPLCCNIAWEIVYCVF, LGVFAMGLLINFGVMYAAIIF, LPWIFCIGVLGFLTGHLALAA, IGPSLAYSWGAVVCQLLLSVG, LWLSRFLGSCCTVGFASLRWMYW, and LVLWSLAVFLMVDGSYGVCFW.

The protein belongs to the paxB family.

Its subcellular location is the membrane. It participates in secondary metabolite biosynthesis. Its function is as follows. Terpene cyclase; part of the gene cluster that mediates the biosynthesis of the indole diterpenes janthitremanes such as shearinine K or shearinine A. The geranylgeranyl diphosphate (GGPP) synthase janG catalyzes the first step in janthitremane biosynthesis via conversion of farnesyl pyrophosphate and isopentyl pyrophosphate into geranylgeranyl pyrophosphate (GGPP). Condensation of indole-3-glycerol phosphate with GGPP by the prenyl transferase janC then forms 3-geranylgeranylindole (3-GGI). Epoxidation by the FAD-dependent monooxygenase janM leads to a epoxidized-GGI that is substrate of the terpene cyclase janB for cyclization to yield paspaline. Paspaline is subsequently converted to 13-desoxypaspaline by the cytochrome P450 monooxygenase janP, via beta-PC-M6 in a series of alpha-face oxidations. The cytochrome P450 monooxygenase janQ is proposed to carry out sequential beta-face oxidation steps at C-7 and C-13 of 13-desoxypaspaline to form paspalicine and paspalinine respectively. The indole diterpene prenyltransferase janD may then convert paspalinine into shearinine K which is substrate of janO and/or additional enzymes for oxidation and cyclization to generate shearinine A. This Penicillium janthinellum (Penicillium vitale) protein is Terpene cyclase janB.